The chain runs to 96 residues: Prokineticin Bv8-like peptide 2 (96 aa).

Positions 1–19 are cleaved as a signal peptide; that stretch reads MKCFAQIVVLLLVIAFSHG. 5 disulfides stabilise this stretch: cysteine 26-cysteine 38, cysteine 32-cysteine 50, cysteine 37-cysteine 78, cysteine 60-cysteine 86, and cysteine 80-cysteine 95.

Belongs to the AVIT (prokineticin) family. As to expression, expressed by the skin glands.

Its subcellular location is the secreted. Potent agonist for both PKR1/PROKR1 and PKR2/PROKR2, and inducer of a potent and long-lasting hyperalgesia. Also potentiates capsaicin-induced TRPV1 current when tested on DRG neurons. At subnanomolar concentrations, this protein both induces potent chemotaxis of macrophages and stimulates LPS-induced production of the pro-inflammatory cytokines IL-1 and IL-12. In vivo, potently stimulates the contraction of the guinea-pig gastrointestinal (GI) smooth muscle (nanomolar concentration) and rabbit aortic rings. In Bombina maxima (Giant fire-bellied toad), this protein is Prokineticin Bv8-like peptide 2.